Reading from the N-terminus, the 1102-residue chain is Ubiquitin carboxyl-terminal hydrolase 7 (1102 aa).

The span at 1–10 shows a compositional bias: low complexity; it reads MNHQQQQQQQ. Residues 1 to 38 are disordered; that stretch reads MNHQQQQQQQKAGEQQLSEPEDMEMEAGDTDDPPRITQ. The interaction with TSPYL5 stretch occupies residues 1-208; the sequence is MNHQQQQQQQ…APHGVAWDSK (208 aa). S18 carries the phosphoserine modification. The span at 19 to 31 shows a compositional bias: acidic residues; sequence EPEDMEMEAGDTD. S49 is subject to Phosphoserine. An interaction with p53/TP53, MDM2 and EBNA1 region spans residues 53-208; sequence NTAEEDMEDD…APHGVAWDSK (156 aa). The 128-residue stretch at 68 to 195 folds into the MATH domain; that stretch reads EATFQFTVER…DDKVTFEVFV (128 aa). Residues 70–205 are necessary for nuclear localization; it reads TFQFTVERFS…QADAPHGVAW (136 aa). The 308-residue stretch at 214–521 folds into the USP domain; it reads VGLKNQGATC…NAYMLVYIRE (308 aa). C223 serves as the catalytic Nucleophile. Catalysis depends on H464, which acts as the Proton acceptor. Positions 622–801 are interaction with ICP0/VMW110; the sequence is LWPMQARSNG…HRVDVIFCDK (180 aa). N6-acetyllysine; alternate is present on K869. K869 participates in a covalent cross-link: Glycyl lysine isopeptide (Lys-Gly) (interchain with G-Cter in SUMO2); alternate. A Glycyl lysine isopeptide (Lys-Gly) (interchain with G-Cter in ubiquitin); alternate cross-link involves residue K869. Residue K882 forms a Glycyl lysine isopeptide (Lys-Gly) (interchain with G-Cter in SUMO2) linkage. Phosphoserine is present on S963. Residues K1084 and K1096 each carry the N6-acetyllysine modification.

Belongs to the peptidase C19 family. As to quaternary structure, monomer. Homodimer. Part of a complex with DAXX, MDM2, RASSF1 and USP7. Part of a complex with DAXX, MDM2 and USP7. Interacts with MDM2; the interaction is independent of p53/TP53. Interacts with DAXX; the interaction is direct and independent of MDM2 and p53/TP53. Component of a complex composed of KMT2E/MLL5 (isoform 3), OGT (isoform 1) and USP7; the complex stabilizes KMT2E/MLL5, preventing KMT2E/MLL5 ubiquitination and proteasomal-mediated degradation. Interacts (via MATH domain) with KMT2E/MLL5 isoform 3. Interacts with OGT isoform 1. Interacts with FOXO4; the interaction is enhanced in presence of hydrogen peroxide and occurs independently of p53/TP53. Interacts with p53/TP53; the interaction is enhanced in response to DNA damage. Interacts with TSPYL5; this impairs interaction with p53/TP53. Interacts with PTEN; the interaction is direct. Interacts with ATXN1 and the strength of interaction is influenced by the length of the poly-Gln region in ATXN1. A weaker interaction seen with mutants having longer poly-Gln regions. Interacts with KIAA1530/UVSSA. Interacts with ABRAXAS2; the interaction is direct. Identified in a complex with TP53/p53 and ABRAXAS2. Interacts with MEX3C and antagonizes its ability to degrade mRNA. Interacts with DNMT1 and UHRF1. Interacts with FOXP3. Interacts (via MATH domain) with RNF220. Associated component of the Polycomb group (PcG) multiprotein PRC1-like complex. Interacts with EPOP. Interacts with OTUD4 and USP9X; the interaction is direct. Interacts with CRY2. Interacts with REST. Interacts with ERCC6. Part of a complex consisting of USP7, MAGEL2 and TRIM27; directly interacts with MAGEL2; directly interacts with TRIM27. (Microbial infection) Isoform 1 and isoform 2 interact with herpesvirus 1 trans-acting transcriptional protein ICP0/VMW110. Binding to ICP0/VMW110 may modulate the substrate specificity or activity of USP7 to stabilize viral proteins. In terms of assembly, (Microbial infection) Interacts with Epstein-Barr virus EBNA1; the interaction is independent and simultaneous to EBNA1 interaction with USP7 as well as necessary for PML nuclear bodies disruption by EBNA1. EBNA1, USP7 and CSNK2B form a ternary complex. EBNA1 shows a 10-fold higher affinity than p53/TP53 and can compete with it for USP7 binding. As to quaternary structure, (Microbial infection) Interacts with human cytomegalovirus proteins UL35 and UL35A; these interactions inhibit the ability of USP7 to form nuclear bodies. (Microbial infection) Interacts with herpes virus 8/HHV-8 proteins vIRF-1 and vIRF-3; these interactions may disrupt TP53 signaling pathway during viral infection by decreasing the availability of USP7 for deubiquitinating and stabilizing TP53. In terms of assembly, (Microbial infection) Interacts with herpes virus 8/HHV-8 protein vIRF-2; this interaction modulates antiviral signaling via disruption of USP7 interactions with innate immune signaling proteins TRAF3 and TRAF6 thus affecting their ubiquitination. In terms of processing, isoform 1: Phosphorylated. Isoform 1 is phosphorylated at positions Ser-18 and Ser-963. Isoform 2: Not phosphorylated. Isoform 1: Polyneddylated. Isoform 2: Not Polyneddylated. Post-translationally, isoform 1 and isoform 2: Not sumoylated. In terms of processing, isoform 1 and isoform 2: Polyubiquitinated by herpesvirus 1 trans-acting transcriptional protein ICP0/VMW110; leading to its subsequent proteasomal degradation. Isoform 1: Ubiquitinated at Lys-869. In terms of tissue distribution, expressed in neural progenitor cells (at protein level). Widely expressed. Overexpressed in prostate cancer.

It localises to the nucleus. The protein resides in the cytoplasm. Its subcellular location is the PML body. The protein localises to the chromosome. The enzyme catalyses Thiol-dependent hydrolysis of ester, thioester, amide, peptide and isopeptide bonds formed by the C-terminal Gly of ubiquitin (a 76-residue protein attached to proteins as an intracellular targeting signal).. Inhibited by N-ethyl-maleimide (NEM) and divalent cations. Tolerates high concentrations of NaCl but is inhibited at concentrations of 195 mM and higher. Functionally, hydrolase that deubiquitinates target proteins such as ARMC5, FOXO4, DEPTOR, KAT5, p53/TP53, MDM2, ERCC6, DNMT1, UHRF1, PTEN, KMT2E/MLL5 and DAXX. Together with DAXX, prevents MDM2 self-ubiquitination and enhances the E3 ligase activity of MDM2 towards p53/TP53, thereby promoting p53/TP53 ubiquitination and proteasomal degradation. Deubiquitinates p53/TP53, preventing degradation of p53/TP53, and enhances p53/TP53-dependent transcription regulation, cell growth repression and apoptosis. Deubiquitinates p53/TP53 and MDM2 and strongly stabilizes p53/TP53 even in the presence of excess MDM2, and also induces p53/TP53-dependent cell growth repression and apoptosis. Deubiquitination of FOXO4 in presence of hydrogen peroxide is not dependent on p53/TP53 and inhibits FOXO4-induced transcriptional activity. In association with DAXX, is involved in the deubiquitination and translocation of PTEN from the nucleus to the cytoplasm, both processes that are counteracted by PML. Deubiquitinates KMT2E/MLL5 preventing KMT2E/MLL5 proteasomal-mediated degradation. Involved in cell proliferation during early embryonic development. Involved in transcription-coupled nucleotide excision repair (TC-NER) in response to UV damage: recruited to DNA damage sites following interaction with KIAA1530/UVSSA and promotes deubiquitination of ERCC6, preventing UV-induced degradation of ERCC6. Involved in maintenance of DNA methylation via its interaction with UHRF1 and DNMT1: acts by mediating deubiquitination of UHRF1 and DNMT1, preventing their degradation and promoting DNA methylation by DNMT1. Deubiquitinates alkylation repair enzyme ALKBH3. OTUD4 recruits USP7 and USP9X to stabilize ALKBH3, thereby promoting the repair of alkylated DNA lesions. Acts as a chromatin regulator via its association with the Polycomb group (PcG) multiprotein PRC1-like complex; may act by deubiquitinating components of the PRC1-like complex. Able to mediate deubiquitination of histone H2B; it is however unsure whether this activity takes place in vivo. Exhibits a preference towards 'Lys-48'-linked ubiquitin chains. Increases regulatory T-cells (Treg) suppressive capacity by deubiquitinating and stabilizing the transcription factor FOXP3 which is crucial for Treg cell function. Plays a role in the maintenance of the circadian clock periodicity via deubiquitination and stabilization of the CRY1 and CRY2 proteins. Deubiquitinates REST, thereby stabilizing REST and promoting the maintenance of neural progenitor cells. Deubiquitinates SIRT7, inhibiting SIRT7 histone deacetylase activity and regulating gluconeogenesis. Involved in the regulation of WASH-dependent actin polymerization at the surface of endosomes and the regulation of endosomal protein recycling. It maintains optimal WASH complex activity and precise F-actin levels via deubiquitination of TRIM27 and WASHC1. Mediates the deubiquitination of phosphorylated DEPTOR, promoting its stability and leading to decreased mTORC1 signaling. In terms of biological role, (Microbial infection) Contributes to the overall stabilization and trans-activation capability of the herpesvirus 1 trans-acting transcriptional protein ICP0/VMW110 during HSV-1 infection. (Microbial infection) Upon infection with Epstein-Barr virus, the interaction with viral EBNA1 increases the association of USP7 with PML proteins, which is required for the polyubiquitylation and degradation of PML. This chain is Ubiquitin carboxyl-terminal hydrolase 7, found in Homo sapiens (Human).